Consider the following 109-residue polypeptide: Urocortin-2 (109 aa).

Residues 1-22 form the signal peptide; sequence MTRWALVVFMVLMLDRVPGTPI. A propeptide spanning residues 23–67 is cleaved from the precursor; sequence PTFQLLPQNYPETTPSSVSSESPSDTTTGPSASWSNSKASPYLDT. The disordered stretch occupies residues 24–60; the sequence is TFQLLPQNYPETTPSSVSSESPSDTTTGPSASWSNSK. Residues 33 to 50 are compositionally biased toward low complexity; that stretch reads PETTPSSVSSESPSDTTT. Positions 51–60 are enriched in polar residues; it reads GPSASWSNSK. A Valine amide; partial modification is found at Val106.

Belongs to the sauvagine/corticotropin-releasing factor/urotensin I family. In terms of assembly, binds with high affinity to CRF receptors 2-alpha and 2-beta. Post-translationally, glycosylated.

The protein localises to the secreted. Its function is as follows. Suppresses food intake, delays gastric emptying and decreases heat-induced edema. Might represent an endogenous ligand for maintaining homeostasis after stress. The sequence is that of Urocortin-2 (Ucn2) from Rattus norvegicus (Rat).